Consider the following 249-residue polypeptide: Type III pantothenate kinase (249 aa).

6–13 (DVGNTHTT) serves as a coordination point for ATP. 101–104 (GADR) serves as a coordination point for substrate. Asp-103 functions as the Proton acceptor in the catalytic mechanism. Asp-123 contributes to the K(+) binding site. Thr-126 serves as a coordination point for ATP. Substrate is bound at residue Thr-177.

The protein belongs to the type III pantothenate kinase family. In terms of assembly, homodimer. NH4(+) is required as a cofactor. Requires K(+) as cofactor.

It is found in the cytoplasm. The catalysed reaction is (R)-pantothenate + ATP = (R)-4'-phosphopantothenate + ADP + H(+). It functions in the pathway cofactor biosynthesis; coenzyme A biosynthesis; CoA from (R)-pantothenate: step 1/5. Functionally, catalyzes the phosphorylation of pantothenate (Pan), the first step in CoA biosynthesis. The chain is Type III pantothenate kinase from Thermosipho africanus (strain TCF52B).